Reading from the N-terminus, the 239-residue chain is Proteasome subunit beta (239 aa).

Residues 1–16 (MRQPDSSLPRTGQDHT) are compositionally biased toward polar residues. The tract at residues 1–32 (MRQPDSSLPRTGQDHTLSPYEPELGEVPSNDL) is disordered. A propeptide spans 1-44 (MRQPDSSLPRTGQDHTLSPYEPELGEVPSNDLSMADLDNVNKTG) (removed in mature form; by autocatalysis). T45 functions as the Nucleophile in the catalytic mechanism.

It belongs to the peptidase T1B family. The 20S proteasome core is composed of 14 alpha and 14 beta subunits that assemble into four stacked heptameric rings, resulting in a barrel-shaped structure. The two inner rings, each composed of seven catalytic beta subunits, are sandwiched by two outer rings, each composed of seven alpha subunits. The catalytic chamber with the active sites is on the inside of the barrel. Has a gated structure, the ends of the cylinder being occluded by the N-termini of the alpha-subunits. Is capped at one or both ends by the proteasome regulatory ATPase, PAN.

It is found in the cytoplasm. The enzyme catalyses Cleavage of peptide bonds with very broad specificity.. With respect to regulation, the formation of the proteasomal ATPase PAN-20S proteasome complex, via the docking of the C-termini of PAN into the intersubunit pockets in the alpha-rings, triggers opening of the gate for substrate entry. Interconversion between the open-gate and close-gate conformations leads to a dynamic regulation of the 20S proteasome proteolysis activity. Component of the proteasome core, a large protease complex with broad specificity involved in protein degradation. This is Proteasome subunit beta from Natronomonas pharaonis (strain ATCC 35678 / DSM 2160 / CIP 103997 / JCM 8858 / NBRC 14720 / NCIMB 2260 / Gabara) (Halobacterium pharaonis).